A 468-amino-acid chain; its full sequence is ATP synthase subunit beta (468 aa).

148 to 155 (GGAGVGKT) contributes to the ATP binding site.

This sequence belongs to the ATPase alpha/beta chains family. F-type ATPases have 2 components, CF(1) - the catalytic core - and CF(0) - the membrane proton channel. CF(1) has five subunits: alpha(3), beta(3), gamma(1), delta(1), epsilon(1). CF(0) has three main subunits: a(1), b(2) and c(9-12). The alpha and beta chains form an alternating ring which encloses part of the gamma chain. CF(1) is attached to CF(0) by a central stalk formed by the gamma and epsilon chains, while a peripheral stalk is formed by the delta and b chains.

Its subcellular location is the cell inner membrane. The enzyme catalyses ATP + H2O + 4 H(+)(in) = ADP + phosphate + 5 H(+)(out). Its function is as follows. Produces ATP from ADP in the presence of a proton gradient across the membrane. The catalytic sites are hosted primarily by the beta subunits. The polypeptide is ATP synthase subunit beta (Xanthomonas euvesicatoria pv. vesicatoria (strain 85-10) (Xanthomonas campestris pv. vesicatoria)).